The chain runs to 292 residues: tRNA-cytidine(32) 2-sulfurtransferase (292 aa).

Residues 62–67 (SGGKDS) carry the PP-loop motif motif. The [4Fe-4S] cluster site is built by Cys137, Cys140, and Cys228.

It belongs to the TtcA family. Homodimer. It depends on Mg(2+) as a cofactor. The cofactor is [4Fe-4S] cluster.

Its subcellular location is the cytoplasm. It carries out the reaction cytidine(32) in tRNA + S-sulfanyl-L-cysteinyl-[cysteine desulfurase] + AH2 + ATP = 2-thiocytidine(32) in tRNA + L-cysteinyl-[cysteine desulfurase] + A + AMP + diphosphate + H(+). It functions in the pathway tRNA modification. Its function is as follows. Catalyzes the ATP-dependent 2-thiolation of cytidine in position 32 of tRNA, to form 2-thiocytidine (s(2)C32). The sulfur atoms are provided by the cysteine/cysteine desulfurase (IscS) system. The sequence is that of tRNA-cytidine(32) 2-sulfurtransferase from Brucella anthropi (strain ATCC 49188 / DSM 6882 / CCUG 24695 / JCM 21032 / LMG 3331 / NBRC 15819 / NCTC 12168 / Alc 37) (Ochrobactrum anthropi).